The following is a 257-amino-acid chain: Small ribosomal subunit protein uS2 (257 aa).

This sequence belongs to the universal ribosomal protein uS2 family.

The sequence is that of Small ribosomal subunit protein uS2 from Bartonella henselae (strain ATCC 49882 / DSM 28221 / CCUG 30454 / Houston 1) (Rochalimaea henselae).